A 262-amino-acid polypeptide reads, in one-letter code: pFDCC methylesterase MES16 (262 aa).

Catalysis depends on S87, which acts as the Acyl-ester intermediate. Active-site charge relay system residues include D211 and H239.

This sequence belongs to the AB hydrolase superfamily. Methylesterase family.

The protein resides in the cytoplasm. The catalysed reaction is methyl (indol-3-yl)acetate + H2O = (indol-3-yl)acetate + methanol + H(+). The enzyme catalyses methyl (-)-jasmonate + H2O = jasmonate + methanol + H(+). It carries out the reaction primary fluorescent dioxobilin-type chlorophyll catabolite + H2O = O13(4)-desmethyl pFDCC + methanol + H(+). It participates in plant hormone biosynthesis. It functions in the pathway lipid metabolism; oxylipin biosynthesis. Its pathway is porphyrin-containing compound metabolism; chlorophyll degradation. Involved in the chlorophyll breakdown by its action in fluorescent chlorophyll catabolites (FCCs) demethylation. Demethylates the C13(2)-carboxymethyl group present at the isocyclic ring of chlorophyll. Uses primary fluorescent dioxobilin-type chlorophyll catabolite (pFDCC) as substrate to produce O13(4)-desmethyl pFDCC. Also able to catalyze pheophorbides in vitro. Methylesterase shown to have carboxylesterase activity, methyl indole-3-acetic acid (MeIAA) esterase activity and methyl jasmonate (MeJA) esterase activity in vitro. The protein is pFDCC methylesterase MES16 of Arabidopsis thaliana (Mouse-ear cress).